Consider the following 55-residue polypeptide: Small ribosomal subunit protein bS21 (55 aa).

The protein belongs to the bacterial ribosomal protein bS21 family.

This chain is Small ribosomal subunit protein bS21, found in Ureaplasma parvum serovar 3 (strain ATCC 27815 / 27 / NCTC 11736).